A 93-amino-acid polypeptide reads, in one-letter code: Protein F-93 (93 aa).

In terms of assembly, homodimer.

Functionally, probable transcription factor that recognizes a (pseudo-)palindromic DNA target sequence. This Saccharolobus solfataricus (Sulfolobus solfataricus) protein is Protein F-93.